The chain runs to 887 residues: Alanine--tRNA ligase (887 aa).

H564, H568, C675, and H679 together coordinate Zn(2+). Gly residues predominate over residues 851–866 (GQGGGGRPDMAQGGGP). The interval 851–871 (GQGGGGRPDMAQGGGPDGDKA) is disordered.

The protein belongs to the class-II aminoacyl-tRNA synthetase family. The cofactor is Zn(2+).

It localises to the cytoplasm. It catalyses the reaction tRNA(Ala) + L-alanine + ATP = L-alanyl-tRNA(Ala) + AMP + diphosphate. In terms of biological role, catalyzes the attachment of alanine to tRNA(Ala) in a two-step reaction: alanine is first activated by ATP to form Ala-AMP and then transferred to the acceptor end of tRNA(Ala). Also edits incorrectly charged Ser-tRNA(Ala) and Gly-tRNA(Ala) via its editing domain. The chain is Alanine--tRNA ligase from Rhizorhabdus wittichii (strain DSM 6014 / CCUG 31198 / JCM 15750 / NBRC 105917 / EY 4224 / RW1) (Sphingomonas wittichii).